A 351-amino-acid polypeptide reads, in one-letter code: Methylxanthine N1-demethylase NdmA (351 aa).

In terms of domain architecture, Rieske spans 17-125 (WHPVCTVTEL…CEERYGLIWI (109 aa)). Cysteine 62, histidine 64, cysteine 81, and histidine 84 together coordinate [2Fe-2S] cluster.

It depends on [2Fe-2S] cluster as a cofactor.

The catalysed reaction is caffeine + NADH + O2 + H(+) = theobromine + formaldehyde + NAD(+) + H2O. The enzyme catalyses caffeine + NADPH + O2 + H(+) = theobromine + formaldehyde + NADP(+) + H2O. It carries out the reaction theophylline + NADH + O2 + H(+) = 3-methylxanthine + formaldehyde + NAD(+) + H2O. It catalyses the reaction theophylline + NADPH + O2 + H(+) = 3-methylxanthine + formaldehyde + NADP(+) + H2O. The catalysed reaction is 1,7-dimethylxanthine + NADH + O2 + H(+) = 7-methylxanthine + formaldehyde + NAD(+) + H2O. The enzyme catalyses 1,7-dimethylxanthine + NADPH + O2 + H(+) = 7-methylxanthine + formaldehyde + NADP(+) + H2O. It participates in alkaloid degradation. Involved in the caffeine degradation, which is the essential first step for assimilating the carbon and nitrogen in caffeine. Catalyzes the N1-demethylation of caffeine to produce theobromine and formaldehyde. Also catalyzes the N1-demethylation of theophylline, paraxanthine, and 1-methylxanthine to 3-methylxanthine, 7-methylxanthine, and xanthine, respectively. NADH is the preferred substrate. This is Methylxanthine N1-demethylase NdmA (ndmA) from Pseudomonas putida (Arthrobacter siderocapsulatus).